A 369-amino-acid polypeptide reads, in one-letter code: Beta-1,4-galactosyltransferase 2 (369 aa).

At methionine 1–alanine 15 the chain is on the cytoplasmic side. Residues valine 16–alanine 36 form a helical; Signal-anchor for type II membrane protein membrane-spanning segment. The Lumenal segment spans residues glutamine 37–glycine 369. The segment covering alanine 58–serine 73 has biased composition (polar residues). The tract at residues alanine 58–valine 90 is disordered. N-linked (GlcNAc...) asparagine glycans are attached at residues asparagine 63 and asparagine 68. Residues cysteine 94 and cysteine 136 are joined by a disulfide bond. Residues proline 147 to arginine 151, phenylalanine 186 to arginine 188, valine 214 to aspartate 215, and tryptophan 275 contribute to the UDP-alpha-D-galactose site. Cysteine 208 and cysteine 227 are oxidised to a cystine. Aspartate 215 contributes to the Mn(2+) binding site. Residue glycine 277–aspartate 280 participates in N-acetyl-D-glucosamine binding. Histidine 308 is a Mn(2+) binding site. Position 308–310 (histidine 308–arginine 310) interacts with UDP-alpha-D-galactose. Residue arginine 320 coordinates N-acetyl-D-glucosamine. An N-linked (GlcNAc...) asparagine glycan is attached at asparagine 354.

The protein belongs to the glycosyltransferase 7 family. Mn(2+) is required as a cofactor.

The protein localises to the golgi apparatus. The protein resides in the golgi stack membrane. It carries out the reaction D-glucose + UDP-alpha-D-galactose = lactose + UDP + H(+). It catalyses the reaction an N-acetyl-beta-D-glucosaminyl derivative + UDP-alpha-D-galactose = a beta-D-galactosyl-(1-&gt;4)-N-acetyl-beta-D-glucosaminyl derivative + UDP + H(+). The catalysed reaction is N-acetyl-D-glucosamine + UDP-alpha-D-galactose = beta-D-galactosyl-(1-&gt;4)-N-acetyl-D-glucosamine + UDP + H(+). The protein operates within protein modification; protein glycosylation. In terms of biological role, responsible for the synthesis of complex-type N-linked oligosaccharides in many glycoproteins as well as the carbohydrate moieties of glycolipids. Can produce lactose. This is Beta-1,4-galactosyltransferase 2 from Mus musculus (Mouse).